Consider the following 972-residue polypeptide: Peptidyl-glycine alpha-amidating monooxygenase (972 aa).

The signal sequence occupies residues 1–20 (MAGFRSLLVLLLVFPSGCVG). The interval 1-494 (MAGFRSLLVL…EGTWEPEHTG (494 aa)) is peptidylglycine alpha-hydroxylating monooxygenase. Residues 21-30 (FRSPLSVFKR) constitute a propeptide that is removed on maturation. Residues 31 to 873 (FKETTRSFSN…VPAVLITTLL (843 aa)) lie on the Intragranular side of the membrane. 5 disulfides stabilise this stretch: cysteine 42–cysteine 181, cysteine 76–cysteine 121, cysteine 109–cysteine 126, cysteine 222–cysteine 329, and cysteine 288–cysteine 310. Residues histidine 102 and histidine 103 each coordinate Cu(2+). Cu(2+) is bound by residues histidine 167, histidine 237, histidine 239, and methionine 309. The interval 495-817 (DFHVEEALDW…STEKMEHRSV (323 aa)) is peptidyl-alpha-hydroxyglycine alpha-amidating lyase. NHL repeat units follow at residues 498 to 541 (VEEA…NSFD), 567 to 608 (AAVL…LDPK), 617 to 662 (LGRS…FSPS), and 670 to 714 (GEAS…FKTD). Residue valine 517 participates in Ca(2+) binding. Arginine 530 contacts a protein. Histidine 582 lines the Zn(2+) pocket. Leucine 584 is a Ca(2+) binding site. An intrachain disulfide couples cysteine 631 to cysteine 652. Tyrosine 651 is a binding site for a protein. Residue histidine 687 participates in Zn(2+) binding. Cysteine 699 and cysteine 710 form a disulfide bridge. Arginine 703 is an a protein binding site. A glycan (N-linked (GlcNAc...) asparagine) is linked at asparagine 762. The NHL 5 repeat unit spans residues 766–809 (GEIIDVFKPVRKHFDMPHDIAASEDGTVYVGDAHTNTVWKFTST). Position 783 (histidine 783) interacts with Zn(2+). Aspartate 784 provides a ligand contact to Ca(2+). A helical transmembrane segment spans residues 874–897 (VIPVVVLLAIALFIRWKKSRAFGD). At 898 to 972 (SERKLEASSG…APPPAPAPSS (75 aa)) the chain is on the cytoplasmic side. Residues 925–942 (NFFASRKGYSRKGFDRLS) are interaction with RASSF9. Residues serine 929 and serine 942 each carry the phosphoserine modification. The interval 937 to 972 (GFDRLSTEGSDQEKDEDASESEEEYSAPPPAPAPSS) is disordered. At threonine 943 the chain carries Phosphothreonine. Serine 946 is modified (phosphoserine; by UHMK1). The span at 949-961 (EKDEDASESEEEY) shows a compositional bias: acidic residues. At serine 957 the chain carries Phosphoserine. The span at 963 to 972 (APPPAPAPSS) shows a compositional bias: pro residues.

It in the C-terminal section; belongs to the peptidyl-alpha-hydroxyglycine alpha-amidating lyase family. The protein in the N-terminal section; belongs to the copper type II ascorbate-dependent monooxygenase family. As to quaternary structure, monomer. Interacts with RASSF9. It depends on Zn(2+) as a cofactor. Cu(2+) serves as cofactor.

Its subcellular location is the cytoplasmic vesicle. The protein resides in the secretory vesicle membrane. It carries out the reaction a [peptide]-C-terminal glycine + 2 L-ascorbate + O2 = a [peptide]-C-terminal (2S)-2-hydroxyglycine + 2 monodehydro-L-ascorbate radical + H2O. It catalyses the reaction a [peptide]-C-terminal (2S)-2-hydroxyglycine = a [peptide]-C-terminal amide + glyoxylate. The enzyme catalyses N-dodecanoylglycine + 2 L-ascorbate + O2 = N-dodecanoyl-(2S)-hydroxyglycine + 2 monodehydro-L-ascorbate radical + H2O. The catalysed reaction is N-dodecanoyl-(2S)-hydroxyglycine = dodecanamide + glyoxylate. It carries out the reaction N-(9Z,12Z,15Z)-octadecatrienoylglycine + 2 L-ascorbate + O2 = N-(9Z,12Z,15Z)-octadecatrienoyl-(2S)-hydroxyglycine + 2 monodehydro-L-ascorbate radical + H2O. It catalyses the reaction N-(9Z,12Z,15Z)-octadecatrienoyl-(2S)-hydroxyglycine = (9Z,12Z,15Z)-octadecatrienamide + glyoxylate. The enzyme catalyses N-(9Z-octadecenoyl)glycine + 2 L-ascorbate + O2 = N-(9Z-octadecenoyl)-(2S)-hydroxyglycine + 2 monodehydro-L-ascorbate radical + H2O. The catalysed reaction is N-(9Z-octadecenoyl)-(2S)-hydroxyglycine = (9Z)-octadecenamide + glyoxylate. It carries out the reaction N-tetradecanoylglycine + 2 L-ascorbate + O2 = N-tetradecanoyl-(2S)-hydroxyglycine + 2 monodehydro-L-ascorbate radical + H2O. It catalyses the reaction N-tetradecanoyl-(2S)-hydroxyglycine = tetradecamide + glyoxylate. The enzyme catalyses N-decanoylglycine + 2 L-ascorbate + O2 = N-decanoyl-(2S)-hydroxyglycine + 2 monodehydro-L-ascorbate radical + H2O. The catalysed reaction is N-decanoyl-(2S)-hydroxyglycine = decanamide + glyoxylate. It carries out the reaction N-octanoylglycine + 2 L-ascorbate + O2 = N-octanoyl-(2S)-hydroxyglycine + 2 monodehydro-L-ascorbate radical + H2O. It catalyses the reaction N-octanoyl-(2S)-hydroxyglycine = octanamide + glyoxylate. Its activity is regulated as follows. PAM activity is inhibited by EDTA, phenylglyoxal and diethyl pyrocarbonate. PAL activity is stimulated by cadmium and inhibited by mercury. Its function is as follows. Bifunctional enzyme that catalyzes amidation of the C-terminus of proteins. Alpha-amidation is present at the C-terminus of many endocrine hormones and neuropeptides and is required for their activity. C-terminal amidation also takes place in response to protein fragmentation triggered by oxidative stress, promoting degradation of amidated protein fragments by the proteasome. Alpha-amidation involves two sequential reactions, both of which are catalyzed by separate catalytic domains of the enzyme. The first step, catalyzed by peptidyl alpha-hydroxylating monooxygenase (PHM) domain, is the copper-, ascorbate-, and O2- dependent stereospecific hydroxylation (with S stereochemistry) at the alpha-carbon (C-alpha) of the C-terminal glycine of the peptidylglycine substrate. The second step, catalyzed by the peptidylglycine amidoglycolate lyase (PAL) domain, is the zinc-dependent cleavage of the N-C-alpha bond, producing the alpha-amidated peptide and glyoxylate. Similarly, catalyzes the two-step conversion of an N-fatty acylglycine to a primary fatty acid amide and glyoxylate. This is Peptidyl-glycine alpha-amidating monooxygenase (PAM) from Bos taurus (Bovine).